Here is a 435-residue protein sequence, read N- to C-terminus: Enolase (435 aa).

Position 163 (Q163) interacts with (2R)-2-phosphoglycerate. The active-site Proton donor is E205. Positions 243, 292, and 319 each coordinate Mg(2+). The (2R)-2-phosphoglycerate site is built by K344, R373, S374, and K395. K344 (proton acceptor) is an active-site residue.

Belongs to the enolase family. Mg(2+) is required as a cofactor.

It is found in the cytoplasm. It localises to the secreted. The protein localises to the cell surface. The enzyme catalyses (2R)-2-phosphoglycerate = phosphoenolpyruvate + H2O. It participates in carbohydrate degradation; glycolysis; pyruvate from D-glyceraldehyde 3-phosphate: step 4/5. In terms of biological role, catalyzes the reversible conversion of 2-phosphoglycerate (2-PG) into phosphoenolpyruvate (PEP). It is essential for the degradation of carbohydrates via glycolysis. In Streptococcus agalactiae serotype Ia (strain ATCC 27591 / A909 / CDC SS700), this protein is Enolase.